The following is a 119-amino-acid chain: Protein yippee-like 3 (119 aa).

Residues 19–116 (RRYSCAHCRA…IELNHMIKDN (98 aa)) form the Yippee domain. Zn(2+) contacts are provided by cysteine 23, cysteine 26, cysteine 79, and cysteine 82.

It belongs to the yippee family. In terms of processing, probably ubiquitinated leading to its degradation by the proteasome.

Its subcellular location is the nucleus. It localises to the nucleolus. Its function is as follows. Involved in proliferation and apoptosis in myeloid precursor cells. The polypeptide is Protein yippee-like 3 (YPEL3) (Bos taurus (Bovine)).